Consider the following 293-residue polypeptide: tRNA pseudouridine synthase B (293 aa).

D38 acts as the Nucleophile in catalysis.

The protein belongs to the pseudouridine synthase TruB family. Type 1 subfamily.

It carries out the reaction uridine(55) in tRNA = pseudouridine(55) in tRNA. Its function is as follows. Responsible for synthesis of pseudouridine from uracil-55 in the psi GC loop of transfer RNAs. The chain is tRNA pseudouridine synthase B from Solibacter usitatus (strain Ellin6076).